Here is a 104-residue protein sequence, read N- to C-terminus: MEKIRLKLKAYDHRVLDRSVASIVEAVKRTGADLRGPIPLPTKIRRYTVIKGPHVNKDSREQFEIRVHSRIIDIIVATPETVDSLMKLDLAPEVDVEVRSMGQE.

It belongs to the universal ribosomal protein uS10 family. In terms of assembly, part of the 30S ribosomal subunit.

Functionally, involved in the binding of tRNA to the ribosomes. This chain is Small ribosomal subunit protein uS10, found in Aliarcobacter butzleri (strain RM4018) (Arcobacter butzleri).